The following is a 347-amino-acid chain: Heat-inducible transcription repressor HrcA (347 aa).

It belongs to the HrcA family.

Negative regulator of class I heat shock genes (grpE-dnaK-dnaJ and groELS operons). Prevents heat-shock induction of these operons. This is Heat-inducible transcription repressor HrcA from Enterococcus faecalis (strain ATCC 700802 / V583).